The sequence spans 458 residues: Argininosuccinate lyase (458 aa).

Belongs to the lyase 1 family. Argininosuccinate lyase subfamily.

It is found in the cytoplasm. It catalyses the reaction 2-(N(omega)-L-arginino)succinate = fumarate + L-arginine. It functions in the pathway amino-acid biosynthesis; L-arginine biosynthesis; L-arginine from L-ornithine and carbamoyl phosphate: step 3/3. This is Argininosuccinate lyase from Salmonella paratyphi B (strain ATCC BAA-1250 / SPB7).